The following is a 267-amino-acid chain: Regulatory protein RecX (267 aa).

It belongs to the RecX family.

Its subcellular location is the cytoplasm. In terms of biological role, modulates RecA activity. This chain is Regulatory protein RecX, found in Staphylococcus haemolyticus (strain JCSC1435).